The following is a 329-amino-acid chain: MVQDIKRAEIALDFKNKPVFFLVGSTGIGKTAIAHRIADEIGLSLLSIDSMQVYRKLDIGTAKPSLSERIRYRYGGIDLVDWKDSFNAFLFVQQACHYLAKEWENRRGVLAVGGCGLYFRAMTRGLCNAPPANLQLRTELEKMDRITLLERLTRIDPSAVAWVDCSNPRRIIRAIEVKETSGISLIEWQKKTTLPLVTPFLAFWIDRPQPEAEIRLRRRIKKMFERGWEEETLMLIEEGGMEAVEKCKAIGYKLIGQFLLQKRKNREELEEAIYRQQHGYAKRQKTWFKKEPSLCYYLLKNPEEEYRFIKSCIEKIAFFIRRNHQDFLY.

Position 24–31 (24–31 (GSTGIGKT)) interacts with ATP. 26–31 (TGIGKT) is a substrate binding site. Residues 49-52 (DSMQ) are interaction with substrate tRNA.

This sequence belongs to the IPP transferase family. Monomer. Requires Mg(2+) as cofactor.

It carries out the reaction adenosine(37) in tRNA + dimethylallyl diphosphate = N(6)-dimethylallyladenosine(37) in tRNA + diphosphate. In terms of biological role, catalyzes the transfer of a dimethylallyl group onto the adenine at position 37 in tRNAs that read codons beginning with uridine, leading to the formation of N6-(dimethylallyl)adenosine (i(6)A). In Methylacidiphilum infernorum (isolate V4) (Methylokorus infernorum (strain V4)), this protein is tRNA dimethylallyltransferase.